The sequence spans 75 residues: ATP synthase subunit c (75 aa).

2 helical membrane passes run leucine 13–phenylalanine 33 and phenylalanine 55–isoleucine 75.

The protein belongs to the ATPase C chain family. F-type ATPases have 2 components, F(1) - the catalytic core - and F(0) - the membrane proton channel. F(1) has five subunits: alpha(3), beta(3), gamma(1), delta(1), epsilon(1). F(0) has three main subunits: a(1), b(2) and c(10-14). The alpha and beta chains form an alternating ring which encloses part of the gamma chain. F(1) is attached to F(0) by a central stalk formed by the gamma and epsilon chains, while a peripheral stalk is formed by the delta and b chains.

It is found in the cell membrane. F(1)F(0) ATP synthase produces ATP from ADP in the presence of a proton or sodium gradient. F-type ATPases consist of two structural domains, F(1) containing the extramembraneous catalytic core and F(0) containing the membrane proton channel, linked together by a central stalk and a peripheral stalk. During catalysis, ATP synthesis in the catalytic domain of F(1) is coupled via a rotary mechanism of the central stalk subunits to proton translocation. Its function is as follows. Key component of the F(0) channel; it plays a direct role in translocation across the membrane. A homomeric c-ring of between 10-14 subunits forms the central stalk rotor element with the F(1) delta and epsilon subunits. This is ATP synthase subunit c from Bifidobacterium longum (strain DJO10A).